A 793-amino-acid chain; its full sequence is uncharacterized protein (793 aa).

Positions 1–21 (MLKKTLLAYTIGFAFSPPANA) are cleaved as a signal peptide. An intrachain disulfide couples C769 to C792.

The protein belongs to the fimbrial export usher family.

The protein localises to the cell outer membrane. Its function is as follows. Involved in the export and assembly of a fimbrial subunit across the outer membrane. This is an uncharacterized protein from Escherichia coli (strain K12).